We begin with the raw amino-acid sequence, 159 residues long: Phosphopantetheine adenylyltransferase (159 aa).

A substrate-binding site is contributed by Thr-10. ATP contacts are provided by residues 10–11 (TF) and His-18. The substrate site is built by Lys-42, Met-74, and Arg-88. ATP is bound by residues 89-91 (GLR), Glu-99, and 124-130 (WSFISSS).

This sequence belongs to the bacterial CoaD family. Homohexamer. The cofactor is Mg(2+).

Its subcellular location is the cytoplasm. It catalyses the reaction (R)-4'-phosphopantetheine + ATP + H(+) = 3'-dephospho-CoA + diphosphate. The protein operates within cofactor biosynthesis; coenzyme A biosynthesis; CoA from (R)-pantothenate: step 4/5. In terms of biological role, reversibly transfers an adenylyl group from ATP to 4'-phosphopantetheine, yielding dephospho-CoA (dPCoA) and pyrophosphate. This is Phosphopantetheine adenylyltransferase from Klebsiella pneumoniae (strain 342).